We begin with the raw amino-acid sequence, 701 residues long: MPKSNDDDVAQSEAVPLLDLVKPSLPISFPIKALQDLKSRSYFDSFHFQFNRSTVPFRRNSDCLPNRPRVLVCHDMKGGYVDDKWVQGCENEAGFAIWHWYLMDIFVYFSHSLVTIPPPCWTNTAHRHGVKVLGTFITEWDEGKATCKEMLATKESAQMYAERLAELATALGFDGWLINIENDIDEEQIPNMKEFVSHLKKVLHLSTPGALVIWYDSVTVRGNLQWQDQLTELNKPFFDLCDGIFMNYTWKESYPNLSAEVAGDRKFDVYMGIDVFGRGSFGGGQWTVNAALDLLKRNNVSAAIFAPGWVYETAQPPNFHTAQNKWWSLVEKSWGIVQTYPQVLPFYSDFNQGFGYHVSLEGRQLSDSPWYNISCQSLQPLLEFNEDNKDIIQVTVDQEGKNVFDFSEQHLNNYYEYDSAREASFNGGGNIVFRGKLKGDAYFTTRLFKPHLQLSSSPITISYSVKSDETSNLGILLSFSSPSLETKSILVAPEDPIRRFDDMSLQCLTTSVQTVSEWTVHEASLVMDGHTLTEISAFCYRPENSTKSAEFVALLGHISVKDHVQNQQNPEILLPASSWVIEAHNVELVPGNSSSKILRVKLEWRQKDLEDSAFTRYNVYAENVKSTDLRPRKVLEKPKSETVLLGIAHVPAYYVAELVVESDVKAVRFMVQACGEDASLGKLDEALNLLVDLEGLSVNHD.

It belongs to the glycosyl hydrolase 85 family.

It localises to the cytoplasm. Its subcellular location is the cytosol. The catalysed reaction is an N(4)-(oligosaccharide-(1-&gt;3)-[oligosaccharide-(1-&gt;6)]-beta-D-Man-(1-&gt;4)-beta-D-GlcNAc-(1-&gt;4)-alpha-D-GlcNAc)-L-asparaginyl-[protein] + H2O = an oligosaccharide-(1-&gt;3)-[oligosaccharide-(1-&gt;6)]-beta-D-Man-(1-&gt;4)-D-GlcNAc + N(4)-(N-acetyl-beta-D-glucosaminyl)-L-asparaginyl-[protein]. Endoglycosidase that releases N-glycans from glycoproteins by cleaving the beta-1,4-glycosidic bond in the N,N'-diacetylchitobiose core. Involved in the production of high-mannose type N-glycans during plant development and fruit maturation. This chain is Cytosolic endo-beta-N-acetylglucosaminidase 2, found in Arabidopsis thaliana (Mouse-ear cress).